Reading from the N-terminus, the 148-residue chain is Large ribosomal subunit protein bL9 (148 aa).

This sequence belongs to the bacterial ribosomal protein bL9 family.

Functionally, binds to the 23S rRNA. The protein is Large ribosomal subunit protein bL9 of Prosthecochloris aestuarii (strain DSM 271 / SK 413).